The chain runs to 416 residues: Formyl-CoA:oxalate CoA-transferase (416 aa).

Residues Gln-17 to Ser-18, Arg-38, Leu-72 to Lys-75, Asn-96 to His-98, His-104, and Lys-137 to Glu-140 contribute to the CoA site. Catalysis depends on Asp-169, which acts as the Nucleophile. Gly-248–Gln-250 is a binding site for substrate. Gln-273–Gln-275 serves as a coordination point for CoA.

The protein belongs to the CoA-transferase III family. Frc subfamily. Homodimer.

It catalyses the reaction formyl-CoA + oxalate = oxalyl-CoA + formate. The protein operates within metabolic intermediate degradation; oxalate degradation; CO(2) and formate from oxalate: step 1/2. In terms of biological role, involved in the catabolism of oxalate and in the adapatation to low pH via the induction of the oxalate-dependent acid tolerance response (ATR). Catalyzes the transfer of the CoA moiety from formyl-CoA to oxalate. The protein is Formyl-CoA:oxalate CoA-transferase of Escherichia coli O17:K52:H18 (strain UMN026 / ExPEC).